A 134-amino-acid chain; its full sequence is Early E3B 14.5 kDa protein (134 aa).

The first 21 residues, 1-21, serve as a signal peptide directing secretion; that stretch reads MQAMLPVILILLLPCIPLAST. A helical membrane pass occupies residues 54 to 78; sequence YWIVIVGIINILSCTFFSITIYPTF.

It belongs to the adenoviridae E3_14 family. Post-translationally, phosphorylated on serine; O-glycosylated, but not N-glycosylated.

Its subcellular location is the host membrane. In terms of biological role, down-regulates the EGF receptor and prevents cytolysis by TNF. This Homo sapiens (Human) protein is Early E3B 14.5 kDa protein.